The primary structure comprises 106 residues: MSNLIPGEIIPEQGEIELNLGKEVKTVKVSNSGDRPVQIGSHYHFFEANKALIFDRELTLGMRLDIPAGTAIRFEPGDTTDVKLVPYKGLRIAYGFNSLVNGSLDT.

This sequence belongs to the urease beta subunit family. Heterotrimer of UreA (gamma), UreB (beta) and UreC (alpha) subunits. Three heterotrimers associate to form the active enzyme.

The protein localises to the cytoplasm. It carries out the reaction urea + 2 H2O + H(+) = hydrogencarbonate + 2 NH4(+). It participates in nitrogen metabolism; urea degradation; CO(2) and NH(3) from urea (urease route): step 1/1. The protein is Urease subunit beta of Prochlorococcus marinus (strain MIT 9301).